Reading from the N-terminus, the 256-residue chain is Pimeloyl-[acyl-carrier protein] methyl ester esterase (256 aa).

The 228-residue stretch at 15–242 folds into the AB hydrolase-1 domain; the sequence is HLVLLHGWGL…AAHAPFISHP (228 aa). Substrate is bound by residues Trp22, 82–83, and 143–147; these read SL and FLALQ. Ser82 acts as the Nucleophile in catalysis. Catalysis depends on residues Asp207 and His235. Residue His235 coordinates substrate.

This sequence belongs to the AB hydrolase superfamily. Carboxylesterase BioH family. In terms of assembly, monomer.

The protein resides in the cytoplasm. It catalyses the reaction 6-carboxyhexanoyl-[ACP] methyl ester + H2O = 6-carboxyhexanoyl-[ACP] + methanol + H(+). Its pathway is cofactor biosynthesis; biotin biosynthesis. The physiological role of BioH is to remove the methyl group introduced by BioC when the pimeloyl moiety is complete. It allows to synthesize pimeloyl-ACP via the fatty acid synthetic pathway through the hydrolysis of the ester bonds of pimeloyl-ACP esters. The polypeptide is Pimeloyl-[acyl-carrier protein] methyl ester esterase (Escherichia coli O7:K1 (strain IAI39 / ExPEC)).